The chain runs to 443 residues: Ribosomal protein uS12 methylthiotransferase RimO (443 aa).

The MTTase N-terminal domain maps to 8 to 118 (PKVGFVSLGC…VVNAVHEVVP (111 aa)). [4Fe-4S] cluster contacts are provided by cysteine 17, cysteine 53, cysteine 82, cysteine 151, cysteine 155, and cysteine 158. The Radical SAM core domain maps to 137–375 (LTPRHYAYLK…MAHQQAISAA (239 aa)). A TRAM domain is found at 378-443 (QQRIGKEIEV…DEYDMWAEPI (66 aa)).

This sequence belongs to the methylthiotransferase family. RimO subfamily. It depends on [4Fe-4S] cluster as a cofactor.

It is found in the cytoplasm. The enzyme catalyses L-aspartate(89)-[ribosomal protein uS12]-hydrogen + (sulfur carrier)-SH + AH2 + 2 S-adenosyl-L-methionine = 3-methylsulfanyl-L-aspartate(89)-[ribosomal protein uS12]-hydrogen + (sulfur carrier)-H + 5'-deoxyadenosine + L-methionine + A + S-adenosyl-L-homocysteine + 2 H(+). In terms of biological role, catalyzes the methylthiolation of an aspartic acid residue of ribosomal protein uS12. This Pseudomonas entomophila (strain L48) protein is Ribosomal protein uS12 methylthiotransferase RimO.